We begin with the raw amino-acid sequence, 323 residues long: DNA repair and recombination protein RadA (323 aa).

114-121 (GEFGSGKT) contributes to the ATP binding site.

It belongs to the eukaryotic RecA-like protein family.

Functionally, involved in DNA repair and in homologous recombination. Binds and assemble on single-stranded DNA to form a nucleoprotein filament. Hydrolyzes ATP in a ssDNA-dependent manner and promotes DNA strand exchange between homologous DNA molecules. The protein is DNA repair and recombination protein RadA of Picrophilus torridus (strain ATCC 700027 / DSM 9790 / JCM 10055 / NBRC 100828 / KAW 2/3).